The sequence spans 196 residues: Pyridoxal 5'-phosphate synthase subunit PdxT (196 aa).

An L-glutamine-binding site is contributed by 56 to 58 (GES). The active-site Nucleophile is the cysteine 85. L-glutamine-binding positions include arginine 113 and 141 to 142 (IR). Residues histidine 177 and glutamate 179 each act as charge relay system in the active site.

This sequence belongs to the glutaminase PdxT/SNO family. In the presence of PdxS, forms a dodecamer of heterodimers. Only shows activity in the heterodimer.

The enzyme catalyses aldehydo-D-ribose 5-phosphate + D-glyceraldehyde 3-phosphate + L-glutamine = pyridoxal 5'-phosphate + L-glutamate + phosphate + 3 H2O + H(+). It carries out the reaction L-glutamine + H2O = L-glutamate + NH4(+). It functions in the pathway cofactor biosynthesis; pyridoxal 5'-phosphate biosynthesis. In terms of biological role, catalyzes the hydrolysis of glutamine to glutamate and ammonia as part of the biosynthesis of pyridoxal 5'-phosphate. The resulting ammonia molecule is channeled to the active site of PdxS. The protein is Pyridoxal 5'-phosphate synthase subunit PdxT of Methanospirillum hungatei JF-1 (strain ATCC 27890 / DSM 864 / NBRC 100397 / JF-1).